The chain runs to 50 residues: uncharacterized protein (50 aa).

This is an uncharacterized protein from Ornithodoros (relapsing fever ticks).